Reading from the N-terminus, the 916-residue chain is Protein translocase subunit SecA (916 aa).

ATP is bound by residues Gln-87, 105-109 (GEGKT), and Asp-507. Zn(2+)-binding residues include Cys-900, Cys-902, Cys-911, and His-912.

Belongs to the SecA family. In terms of assembly, monomer and homodimer. Part of the essential Sec protein translocation apparatus which comprises SecA, SecYEG and auxiliary proteins SecDF-YajC and YidC. Requires Zn(2+) as cofactor.

It localises to the cell inner membrane. It is found in the cytoplasm. It carries out the reaction ATP + H2O + cellular proteinSide 1 = ADP + phosphate + cellular proteinSide 2.. In terms of biological role, part of the Sec protein translocase complex. Interacts with the SecYEG preprotein conducting channel. Has a central role in coupling the hydrolysis of ATP to the transfer of proteins into and across the cell membrane, serving both as a receptor for the preprotein-SecB complex and as an ATP-driven molecular motor driving the stepwise translocation of polypeptide chains across the membrane. This Neisseria meningitidis serogroup C / serotype 2a (strain ATCC 700532 / DSM 15464 / FAM18) protein is Protein translocase subunit SecA.